A 336-amino-acid chain; its full sequence is Probable allantoicase (336 aa).

This sequence belongs to the allantoicase family.

The catalysed reaction is allantoate + H2O = (S)-ureidoglycolate + urea. Its pathway is nitrogen metabolism; (S)-allantoin degradation; (S)-ureidoglycolate from allantoate (aminidohydrolase route): step 1/1. The sequence is that of Probable allantoicase from Acinetobacter baumannii (strain AYE).